The primary structure comprises 173 residues: MMRAFYIGRFQPYHFGHHAVITRIAEEVDELVIGIGSAQKSHEATDPFTAGERVLMLYNALENLPVRHYVLPIEDVRYNSIWVHHVASRTPRFDVVYSNNPLVIQLFREAGFCVKESPLYVRERYSGTEIRRRMIAGEKWEHLVPKPVAETIKDIDGITRLRNVSASDSNFSL.

The protein belongs to the archaeal NMN adenylyltransferase family.

It is found in the cytoplasm. The catalysed reaction is beta-nicotinamide D-ribonucleotide + ATP + H(+) = diphosphate + NAD(+). It participates in cofactor biosynthesis; NAD(+) biosynthesis; NAD(+) from nicotinamide D-ribonucleotide: step 1/1. The sequence is that of Nicotinamide-nucleotide adenylyltransferase from Methanosarcina acetivorans (strain ATCC 35395 / DSM 2834 / JCM 12185 / C2A).